Here is a 164-residue protein sequence, read N- to C-terminus: Peptide deformylase (164 aa).

Fe cation is bound by residues C87 and H129. The active site involves E130. H133 provides a ligand contact to Fe cation.

Belongs to the polypeptide deformylase family. It depends on Fe(2+) as a cofactor.

The enzyme catalyses N-terminal N-formyl-L-methionyl-[peptide] + H2O = N-terminal L-methionyl-[peptide] + formate. Removes the formyl group from the N-terminal Met of newly synthesized proteins. Requires at least a dipeptide for an efficient rate of reaction. N-terminal L-methionine is a prerequisite for activity but the enzyme has broad specificity at other positions. The polypeptide is Peptide deformylase (Thermotoga petrophila (strain ATCC BAA-488 / DSM 13995 / JCM 10881 / RKU-1)).